Consider the following 119-residue polypeptide: E3 ubiquitin-protein ligase PPP1R11 (119 aa).

Positions 1–42 (MAESSGPTAGGGATSSTVTTESDTQPEHRSLTLKLRKRKPDK) are disordered. Atypical RING finger domain stretches follow at residues 55–65 (NLGRRSSKCCC) and 87–96 (CESAHCIRGH). Positions 96 to 119 (HKKATSGSKETPSSHHDKTGSMQH) are disordered. Basic and acidic residues predominate over residues 107 to 119 (PSSHHDKTGSMQH).

The enzyme catalyses S-ubiquitinyl-[E2 ubiquitin-conjugating enzyme]-L-cysteine + [acceptor protein]-L-lysine = [E2 ubiquitin-conjugating enzyme]-L-cysteine + N(6)-ubiquitinyl-[acceptor protein]-L-lysine.. It functions in the pathway protein modification; protein ubiquitination. Functionally, atypical E3 ubiquitin-protein ligase which ubiquitinates TLR2 at 'Lys-754' leading to its degradation by the proteasome. Inhibitor of protein phosphatase 1. This Xenopus tropicalis (Western clawed frog) protein is E3 ubiquitin-protein ligase PPP1R11 (ppp1r11).